We begin with the raw amino-acid sequence, 492 residues long: Lysine--tRNA ligase (492 aa).

Residues Asp-395 and Glu-402 each contribute to the Mg(2+) site.

The protein belongs to the class-II aminoacyl-tRNA synthetase family. Homodimer. Requires Mg(2+) as cofactor.

The protein resides in the cytoplasm. The enzyme catalyses tRNA(Lys) + L-lysine + ATP = L-lysyl-tRNA(Lys) + AMP + diphosphate. The polypeptide is Lysine--tRNA ligase (Thermus thermophilus (strain ATCC BAA-163 / DSM 7039 / HB27)).